Here is a 66-residue protein sequence, read N- to C-terminus: Rho-elapitoxin-Da1b (66 aa).

Cystine bridges form between cysteine 3–cysteine 24, cysteine 17–cysteine 42, cysteine 46–cysteine 58, and cysteine 59–cysteine 64.

Belongs to the three-finger toxin family. Short-chain subfamily. Aminergic toxin sub-subfamily. Expressed by the venom gland.

It localises to the secreted. Functionally, non-competitive antagonist of alpha-2 adrenergic receptors (ADRA2) in smooth muscles, and partial antagonist of D3 dopamine receptors (DRD3) (inhibits 25% of methylspiperone binding to this receptor). Also shows a low antagonism on D2 dopamine receptors (DRD2) (short isoform). Shows high affinity to adrenergic receptors (Ki=14 nM (ADRA2A), Ki=73 nM (ADRA2B), and Ki=38 nM (ADRA2C)). Increases heart rate and blood catecholamine concentrations. The polypeptide is Rho-elapitoxin-Da1b (Dendroaspis angusticeps (Eastern green mamba)).